Here is a 485-residue protein sequence, read N- to C-terminus: Probable coniferyl aldehyde dehydrogenase (485 aa).

Residues Glu-226 and Cys-260 contribute to the active site.

This sequence belongs to the aldehyde dehydrogenase family.

It catalyses the reaction (E)-coniferaldehyde + NADP(+) + H2O = (E)-ferulate + NADPH + 2 H(+). The catalysed reaction is (E)-coniferaldehyde + NAD(+) + H2O = (E)-ferulate + NADH + 2 H(+). This chain is Probable coniferyl aldehyde dehydrogenase (calB), found in Caulobacter vibrioides (strain ATCC 19089 / CIP 103742 / CB 15) (Caulobacter crescentus).